The sequence spans 280 residues: Elongation factor Ts (280 aa).

The tract at residues 79 to 82 (TDFV) is involved in Mg(2+) ion dislocation from EF-Tu.

It belongs to the EF-Ts family.

It is found in the cytoplasm. Its function is as follows. Associates with the EF-Tu.GDP complex and induces the exchange of GDP to GTP. It remains bound to the aminoacyl-tRNA.EF-Tu.GTP complex up to the GTP hydrolysis stage on the ribosome. The polypeptide is Elongation factor Ts (Vibrio vulnificus (strain CMCP6)).